The sequence spans 437 residues: Probable D-serine dehydratase (437 aa).

Lys-106 carries the post-translational modification N6-(pyridoxal phosphate)lysine.

This sequence belongs to the serine/threonine dehydratase family. DsdA subfamily. It depends on pyridoxal 5'-phosphate as a cofactor.

It carries out the reaction D-serine = pyruvate + NH4(+). This is Probable D-serine dehydratase from Hahella chejuensis (strain KCTC 2396).